The following is a 391-amino-acid chain: Origin recognition complex subunit 2 (391 aa).

A disordered region spans residues 1-43 (MEEYTDSGEDKNVYSDDDNDYFTASTQNNRTSKNTDSSPLDPK). Residues 22–38 (FTASTQNNRTSKNTDSS) are compositionally biased toward polar residues.

The protein belongs to the ORC2 family. As to quaternary structure, ORC is composed of six subunits.

It localises to the nucleus. Its function is as follows. Component of the origin recognition complex (ORC) that binds origins of replication. DNA-binding is ATP-dependent, however specific DNA sequences that define origins of replication have not been identified so far. ORC is required to assemble the pre-replication complex necessary to initiate DNA replication. The protein is Origin recognition complex subunit 2 (orcB) of Dictyostelium discoideum (Social amoeba).